The chain runs to 92 residues: MTRSLKKNPFVANRLLRKIDKLNTKAEKEIIITWSRASTIIPTMIGHTIAIHNGKEHLPIYINDRMVGHKLGEFAPTLNFRGHAKSDNRSRR.

This sequence belongs to the universal ribosomal protein uS19 family.

Its subcellular location is the plastid. It is found in the chloroplast. Functionally, protein S19 forms a complex with S13 that binds strongly to the 16S ribosomal RNA. This Panax ginseng (Korean ginseng) protein is Small ribosomal subunit protein uS19c.